Consider the following 485-residue polypeptide: Adenylate kinase 8 (485 aa).

2 adenylate kinase regions span residues 58 to 258 (PRVF…TFVL) and 269 to 472 (PRIL…YTVS). Position 67–72 (67–72 (ASGKHT)) interacts with ATP. Positions 87–113 (TPESVLSSDVSLLAKEAQSYRDKGQEV) are NMP 1. AMP contacts are provided by residues 140–143 (GFPK) and glutamine 147. The interval 177-206 (GKRIDTANGEVYHTTFDWPSDPTVQRNLVE) is LID 1. AMP is bound at residue arginine 218. ATP is bound at residue 278 to 283 (GSGRSL). The segment at 298–327 (CCGQVLKEAVADQTKLGEVIQPYIENDQQV) is NMP 2. Residues 325 to 327 (QQV), 354 to 357 (GFPR), and glutamine 361 each bind AMP. The segment at 391–424 (LCMTDPVSGERYHDIYKPAPSSEVHERLQQNPRH) is LID 2. Residue arginine 432 coordinates AMP.

The protein belongs to the adenylate kinase family.

The protein localises to the cytoplasm. It localises to the cytosol. The catalysed reaction is AMP + ATP = 2 ADP. It carries out the reaction a 2'-deoxyribonucleoside 5'-diphosphate + ATP = a 2'-deoxyribonucleoside 5'-triphosphate + ADP. It catalyses the reaction a ribonucleoside 5'-diphosphate + ATP = a ribonucleoside 5'-triphosphate + ADP. Its function is as follows. Nucleoside monophosphate (NMP) kinase that catalyzes the reversible transfer of the terminal phosphate group between nucleoside triphosphates and monophosphates. Has highest activity toward AMP, and weaker activity toward dAMP, CMP and dCMP. Also displays broad nucleoside diphosphate kinase activity. This chain is Adenylate kinase 8 (ak8), found in Xenopus tropicalis (Western clawed frog).